The primary structure comprises 233 residues: Large ribosomal subunit protein uL1 (233 aa).

It belongs to the universal ribosomal protein uL1 family. As to quaternary structure, part of the 50S ribosomal subunit.

Its function is as follows. Binds directly to 23S rRNA. The L1 stalk is quite mobile in the ribosome, and is involved in E site tRNA release. In terms of biological role, protein L1 is also a translational repressor protein, it controls the translation of the L11 operon by binding to its mRNA. The chain is Large ribosomal subunit protein uL1 from Parvibaculum lavamentivorans (strain DS-1 / DSM 13023 / NCIMB 13966).